We begin with the raw amino-acid sequence, 101 residues long: MAKTSMKAREAKRAQLVAKYAEKRLALKAIISSPATSEEDRWDAVLKLQALPRDSSAARQRNRCNQTGRPHGFLRKFGLSRIKLREATMRGEVPGLRKASW.

Belongs to the universal ribosomal protein uS14 family. Part of the 30S ribosomal subunit. Contacts proteins S3 and S10.

Binds 16S rRNA, required for the assembly of 30S particles and may also be responsible for determining the conformation of the 16S rRNA at the A site. In Shewanella frigidimarina (strain NCIMB 400), this protein is Small ribosomal subunit protein uS14.